Reading from the N-terminus, the 44-residue chain is Photosystem I reaction center subunit IX (44 aa).

The helical transmembrane segment at 7–27 (YLSVAPVLSTLWFGSLAGLLI) threads the bilayer.

It belongs to the PsaJ family.

The protein resides in the plastid. It is found in the chloroplast thylakoid membrane. Functionally, may help in the organization of the PsaE and PsaF subunits. In Fagopyrum esculentum subsp. ancestrale (Wild buckwheat), this protein is Photosystem I reaction center subunit IX.